Here is a 437-residue protein sequence, read N- to C-terminus: Ribulose bisphosphate carboxylase-like protein (437 aa).

Lysine 176 functions as the Proton acceptor in the catalytic mechanism. 3 residues coordinate Mg(2+): lysine 202, aspartate 204, and glutamate 205. At lysine 202 the chain carries N6-carboxylysine. Histidine 293 serves as the catalytic Proton acceptor.

It belongs to the RuBisCO large chain family. Type IV subfamily. In terms of assembly, homodimer. The cofactor is Mg(2+).

May be involved in sulfur metabolism and oxidative stress response. Does not show RuBisCO activity. This chain is Ribulose bisphosphate carboxylase-like protein, found in Archaeoglobus fulgidus (strain ATCC 49558 / DSM 4304 / JCM 9628 / NBRC 100126 / VC-16).